Here is a 315-residue protein sequence, read N- to C-terminus: Methionyl-tRNA formyltransferase (315 aa).

(6S)-5,6,7,8-tetrahydrofolate is bound at residue 113–116; sequence SLLP.

The protein belongs to the Fmt family.

The enzyme catalyses L-methionyl-tRNA(fMet) + (6R)-10-formyltetrahydrofolate = N-formyl-L-methionyl-tRNA(fMet) + (6S)-5,6,7,8-tetrahydrofolate + H(+). Functionally, attaches a formyl group to the free amino group of methionyl-tRNA(fMet). The formyl group appears to play a dual role in the initiator identity of N-formylmethionyl-tRNA by promoting its recognition by IF2 and preventing the misappropriation of this tRNA by the elongation apparatus. The chain is Methionyl-tRNA formyltransferase from Pseudoalteromonas atlantica (strain T6c / ATCC BAA-1087).